The primary structure comprises 241 residues: 2-C-methyl-D-erythritol 4-phosphate cytidylyltransferase (241 aa).

This sequence belongs to the IspD/TarI cytidylyltransferase family. IspD subfamily.

It carries out the reaction 2-C-methyl-D-erythritol 4-phosphate + CTP + H(+) = 4-CDP-2-C-methyl-D-erythritol + diphosphate. It functions in the pathway isoprenoid biosynthesis; isopentenyl diphosphate biosynthesis via DXP pathway; isopentenyl diphosphate from 1-deoxy-D-xylulose 5-phosphate: step 2/6. In terms of biological role, catalyzes the formation of 4-diphosphocytidyl-2-C-methyl-D-erythritol from CTP and 2-C-methyl-D-erythritol 4-phosphate (MEP). The chain is 2-C-methyl-D-erythritol 4-phosphate cytidylyltransferase from Pseudoalteromonas translucida (strain TAC 125).